Reading from the N-terminus, the 411-residue chain is Cladofulvin cluster transcriptional coactivator claA (411 aa).

Residues 1–27 (MSDSLAGNGMRQNLNRSSTSSNHTGHA) are compositionally biased toward polar residues. Residues 1 to 32 (MSDSLAGNGMRQNLNRSSTSSNHTGHAQNGRA) form a disordered region. Residues 47-117 (LACQVQSLAC…DPGHIAHTAL (71 aa)) enclose the HTH iclR-type domain. A DNA-binding region (H-T-H motif) is located at residues 77–96 (LHDVAELANVPASQLSRVVR).

It is found in the nucleus. Transcriptional coactivator; part of the gene cluster that mediates the biosynthesis of cladofulvin, a conidial pigment not required for virulence but that plays a role in fitness and resistance to environmental stresses including UV light and low-temperature stress. With claE, coregulates the production of cladofulvin. This Passalora fulva (Tomato leaf mold) protein is Cladofulvin cluster transcriptional coactivator claA.